A 352-amino-acid polypeptide reads, in one-letter code: Peptide chain release factor 1 (352 aa).

Glutamine 229 carries the post-translational modification N5-methylglutamine.

Belongs to the prokaryotic/mitochondrial release factor family. Post-translationally, methylated by PrmC. Methylation increases the termination efficiency of RF1.

The protein resides in the cytoplasm. Its function is as follows. Peptide chain release factor 1 directs the termination of translation in response to the peptide chain termination codons UAG and UAA. This Granulibacter bethesdensis (strain ATCC BAA-1260 / CGDNIH1) protein is Peptide chain release factor 1.